Consider the following 96-residue polypeptide: Large ribosomal subunit protein bL28 (96 aa).

The tract at residues 1–23 (MSRVCELSGKAPMTGNTVSHANN) is disordered.

It belongs to the bacterial ribosomal protein bL28 family.

The polypeptide is Large ribosomal subunit protein bL28 (Cereibacter sphaeroides (strain ATCC 17029 / ATH 2.4.9) (Rhodobacter sphaeroides)).